We begin with the raw amino-acid sequence, 251 residues long: 5'-nucleotidase SurE (251 aa).

Positions 8, 9, 39, and 95 each coordinate a divalent metal cation.

It belongs to the SurE nucleotidase family. A divalent metal cation serves as cofactor.

It is found in the cytoplasm. It catalyses the reaction a ribonucleoside 5'-phosphate + H2O = a ribonucleoside + phosphate. In terms of biological role, nucleotidase that shows phosphatase activity on nucleoside 5'-monophosphates. This Clostridium botulinum (strain Eklund 17B / Type B) protein is 5'-nucleotidase SurE.